Here is an 820-residue protein sequence, read N- to C-terminus: Serine/threonine-protein phosphatase 4 regulatory subunit 3 (820 aa).

Residues methionine 1–valine 100 enclose the WH1 domain. 2 disordered regions span residues glutamate 687 to glutamate 711 and alanine 750 to serine 820. The segment covering glutamate 701–glutamate 711 has biased composition (basic and acidic residues). The segment covering alanine 750–serine 761 has biased composition (polar residues). The span at serine 770–threonine 784 shows a compositional bias: low complexity. Positions tyrosine 798–aspartate 809 are enriched in acidic residues.

Belongs to the SMEK family. In terms of assembly, serine/threonine-protein phosphatase 4 (PP4) occurs in different assemblies of the catalytic and one or more regulatory subunits.

Its function is as follows. Regulatory subunit of serine/threonine-protein phosphatase 4 (PP4). This Xenopus tropicalis (Western clawed frog) protein is Serine/threonine-protein phosphatase 4 regulatory subunit 3.